Consider the following 634-residue polypeptide: MTVASTAAPSYTTSDTNRVISTFSVVDYVVFGLLLVLSLVIGLYHACRGWGRHTVGELLMADRKMGCLPVALSLLATFQSAVAILGGPAEIYRFGTQYWFLGCSYFLGLLIPAHIFIPVFYRLHLTSAYEYLELRFNKAVRICGTVTFIFQMVVYMGVALYAPSLALNAVTGFDLWLSVLALGIVCNIYTALGGLKAVIWTDVFQTLIMFLGQLVVIIVGAAKVGGLGHVWAVASQHGLISGIELDPDPFVRHTFWTLAFGGVFMMLSLYGVNQAQVQRYLSSHSEKAAVLSCYAVFPCQQVALCMSCLIGLVMFAYYKKYSMSPQQEQAAPDQLVLYFVMDLLKDMPGLPGLFVACLFSGSLSTISSAFNSLATVTMEDLIQPWFPQLTETRAIMLSRSLAFAYGLVCLGMAYVSSHLGSVLQAALSIFGMVGGPLLGLFCLGMFFPCANPLGAIVGLLTGLTMAFWIGIGSIVSRMSSAAASPPLNGSSSFLPSNLTVATVTTLMPSTLSKPTGLQQFYSLSYLWYSAHNSTTVIAVGLIVSLLTGGMRGRSLNPGTIYPVLPKLLALLPLSCQKRLCWRSHNQDIPVVTNLFPEKMGNGALQDSRDKERMAEDGLVHQPCSPTYIVQETSL.

Transmembrane regions (helical) follow at residues 23-43 (FSVV…VIGL), 65-85 (MGCL…VAIL), 100-120 (FLGC…IPVF), 142-162 (ICGT…ALYA), 175-195 (LWLS…LGGL), 207-227 (LIMF…VGGL), 255-275 (FWTL…VNQA), 295-315 (AVFP…LVMF), 350-370 (LPGL…SSAF), 403-423 (FAYG…GSVL), 427-447 (LSIF…GMFF), and 455-475 (AIVG…GSIV). 2 N-linked (GlcNAc...) asparagine glycosylation sites follow: Asn-488 and Asn-497. A helical transmembrane segment spans residues 526–546 (LWYSAHNSTTVIAVGLIVSLL).

This sequence belongs to the sodium:solute symporter (SSF) (TC 2.A.21) family. In terms of assembly, interacts with PDZD11. In terms of tissue distribution, expressed in the jejunum (at protein level). Expressed in lung, skeletal muscle, heart, brain, kidney, intestine, liver, and placenta.

It is found in the cell membrane. The protein resides in the apical cell membrane. The enzyme catalyses biotin(out) + 2 Na(+)(out) = biotin(in) + 2 Na(+)(in). It carries out the reaction (R)-pantothenate(out) + 2 Na(+)(out) = (R)-pantothenate(in) + 2 Na(+)(in). It catalyses the reaction (R)-lipoate(out) + 2 Na(+)(out) = (R)-lipoate(in) + 2 Na(+)(in). The catalysed reaction is iodide(out) + 2 Na(+)(out) = iodide(in) + 2 Na(+)(in). Its function is as follows. Sodium-dependent multivitamin transporter that mediates the electrogenic transport of pantothenate, biotin, lipoate and iodide. Functions as a Na(+)-coupled substrate symporter where the stoichiometry of Na(+):substrate is 2:1, creating an electrochemical Na(+) gradient used as driving force for substrate uptake. Required for biotin and pantothenate uptake in the intestine across the brush border membrane. Plays a role in the maintenance of intestinal mucosa integrity, by providing the gut mucosa with biotin. Contributes to the luminal uptake of biotin and pantothenate into the brain across the blood-brain barrier. The protein is Sodium-dependent multivitamin transporter of Rattus norvegicus (Rat).